A 610-amino-acid polypeptide reads, in one-letter code: Elongation factor 4 (610 aa).

The region spanning 11–193 (EKIRNFSIIA…QIVEKVPAPT (183 aa)) is the tr-type G domain. Residues 23 to 28 (DHGKST) and 140 to 143 (NKID) each bind GTP.

The protein belongs to the TRAFAC class translation factor GTPase superfamily. Classic translation factor GTPase family. LepA subfamily.

Its subcellular location is the cell membrane. It catalyses the reaction GTP + H2O = GDP + phosphate + H(+). Required for accurate and efficient protein synthesis under certain stress conditions. May act as a fidelity factor of the translation reaction, by catalyzing a one-codon backward translocation of tRNAs on improperly translocated ribosomes. Back-translocation proceeds from a post-translocation (POST) complex to a pre-translocation (PRE) complex, thus giving elongation factor G a second chance to translocate the tRNAs correctly. Binds to ribosomes in a GTP-dependent manner. The polypeptide is Elongation factor 4 (Streptococcus pyogenes serotype M2 (strain MGAS10270)).